A 152-amino-acid polypeptide reads, in one-letter code: DNA-binding transcriptional activator DecR (152 aa).

Residues 2 to 63 (LDKIDRKLLA…LLDPEKIGLG (62 aa)) form the HTH asnC-type domain. Positions 21–40 (LQALAEAVNLTTTPCWKRLK) form a DNA-binding region, H-T-H motif.

Its function is as follows. Plays a role in L-cysteine detoxification. Binds to the dlsT(yhaO)-yhaM operon promoter in the presence but not absence of L-cysteine; activates transcription from the dlsT(yhaO)-yhaM operon. The polypeptide is DNA-binding transcriptional activator DecR (decR) (Escherichia coli O157:H7).